Here is a 375-residue protein sequence, read N- to C-terminus: MKSLITPITAGLLLALSQPLLAATDTGGYAATAGGNVTGAVSKTATSMQDIVNIIDAARLDANGKKVKGGAYPLVITYTGNEDSLINAAAANICGQWSKDPRGVEIKEFTKGITIIGANGSSANFGIWIKKSSDVVVQNMRIGYLPGGAKDGDMIRVDDSPNVWVDHNELFAANHECDGTPDNDTTFESAVDIKGASNTVTVSYNYIHGVKKVGLDGSSSSDTGRNITYHHNYYNDVNARLPLQRGGLVHAYNNLYTNITGSGLNVRQNGQALIENNWFEKAINPVTSRYDGKNFGTWVLKGNNITKPADFSTYSITWTADTKPYVNADSWTSTGTFPTVAYNYSPVSAQCVKDKLPGYAGVGKNLATLTSTACK.

An N-terminal signal peptide occupies residues 1-22; sequence MKSLITPITAGLLLALSQPLLA. Cys-94 and Cys-177 are oxidised to a cystine. Positions 151, 153, 188, and 192 each coordinate Ca(2+). Arg-240 is a catalytic residue. Cys-351 and Cys-374 are disulfide-bonded.

Belongs to the polysaccharide lyase 1 family. PLADES subfamily. The cofactor is Ca(2+).

The protein resides in the secreted. The catalysed reaction is Eliminative cleavage of (1-&gt;4)-alpha-D-galacturonan to give oligosaccharides with 4-deoxy-alpha-D-galact-4-enuronosyl groups at their non-reducing ends.. Its pathway is glycan metabolism; pectin degradation; 2-dehydro-3-deoxy-D-gluconate from pectin: step 2/5. Involved in maceration and soft-rotting of plant tissue. The polypeptide is Pectate lyase C (Dickeya chrysanthemi (Pectobacterium chrysanthemi)).